The sequence spans 205 residues: uncharacterized protein (205 aa).

The segment covering 1-25 has biased composition (polar residues); the sequence is MSNNNNEAQQPVESTNVESQQNVVQ. Positions 1–205 are disordered; it reads MSNNNNEAQQ…TSDPAQQVEA (205 aa). A compositionally biased stretch (low complexity) spans 32 to 79; the sequence is NENNDNNNNNNNNNNNNNNNNNNNNNNNNSNNNNNSSNNENNENNENN. Residues 80–122 are compositionally biased toward basic and acidic residues; sequence SCEKSEQEKPKEPEEPVQEEKSKEPCDQQKVKENEPAEEKETE. Low complexity-rich tracts occupy residues 123–132 and 146–162; these read PAAPVEPENP and QHQQ…NGES. Basic and acidic residues predominate over residues 170–185; it reads SENKKRSIDEAGDIKD. The span at 194-205 shows a compositional bias: polar residues; it reads VETSDPAQQVEA.

This is an uncharacterized protein from Dictyostelium discoideum (Social amoeba).